The following is a 334-amino-acid chain: Phospholipase A1 2 (334 aa).

The signal sequence occupies residues 1–23; the sequence is MMNLKYLLFFCLVQALHYCYAYG. Positions 24–33 are excised as a propeptide; it reads DPSLSNELDR. C37 and C120 are oxidised to a cystine. Residue S170 is the Nucleophile of the active site. The active-site Charge relay system is D198. Disulfide bonds link C209–C214 and C252–C261. H263 acts as the Charge relay system in catalysis. Intrachain disulfides connect C278-C302, C279-C327, and C295-C300.

The protein belongs to the AB hydrolase superfamily. Lipase family. Not glycosylated. In terms of tissue distribution, expressed by the venom gland.

It is found in the secreted. It catalyses the reaction a 1,2-diacyl-sn-glycero-3-phosphocholine + H2O = a 2-acyl-sn-glycero-3-phosphocholine + a fatty acid + H(+). In terms of biological role, catalyzes the hydrolysis of phosphatidylcholine with phospholipase A1 activity (6.3 U/ml). May act as an allergen and induce hemolytic activity. This is Phospholipase A1 2 from Vespa affinis (Lesser banded hornet).